The sequence spans 795 residues: ATP-dependent RNA helicase DHX15 (795 aa).

Residues 1-108 (MSKRHRLDLG…HSTHAGHAGH (108 aa)) form a disordered region. Phosphoserine is present on serine 15. Residues 20-62 (AGTDGKDRDRDRDREDRSKDRDRERDRGDREREREKEKEKELR) show a composition bias toward basic and acidic residues. The span at 79 to 108 (ASHSAHSTHSAHSTHSTHSAHSTHAGHAGH) shows a compositional bias: low complexity. Residues 147-313 (TDILVRHQSF…FDNCPLLTIP (167 aa)) form the Helicase ATP-binding domain. 160 to 167 (GETGSGKT) contributes to the ATP binding site. Positions 260–263 (DEAH) match the DEAH box motif. One can recognise a Helicase C-terminal domain in the interval 338–518 (TVIQIHMCEE…SVVLQLKKLG (181 aa)). The residue at position 488 (lysine 488) is an N6-acetyllysine. Lysine 786 participates in a covalent cross-link: Glycyl lysine isopeptide (Lys-Gly) (interchain with G-Cter in SUMO2).

Belongs to the DEAD box helicase family. DEAH subfamily. DDX15/PRP43 sub-subfamily. In terms of assembly, component of the U11/U12 snRNPs that are part of the U12-type spliceosome. Identified in the Intron Large spliceosome complex (IL, also named intron lariat spliceosome), a post-mRNA release spliceosomal complex containing the excised intron, U2, U5 and U6 snRNPs, and splicing factors; the association may be transient. The IL complex exists in two distinct conformations, one with the DHX15 (ILS2) and one without (ILS1). Interacts with TFIP11 (via G-patch domain); indicative for a recruitment to the IL complex. Interacts with SSB/La. Interacts with GPATCH2 (via G-patch domain); promoting the RNA helicase activity. Interacts with NKRF (via G-patch domain); promoting the RNA helicase activity. Interacts with NLRP6. In terms of tissue distribution, ubiquitous.

The protein resides in the nucleus. It is found in the nucleolus. The enzyme catalyses ATP + H2O = ADP + phosphate + H(+). Its activity is regulated as follows. ATPase activity is enhanced upon binding to G-patch domain-containing proteins. G-patch domain-containing proteins act like a brace that tethers mobile sections of DHX15 together, stabilizing a functional conformation with high RNA affinity, thereby promoting the ATPase activity. Functionally, RNA helicase involved in mRNA processing and antiviral innate immunity. Pre-mRNA processing factor involved in disassembly of spliceosomes after the release of mature mRNA. In cooperation with TFIP11 seem to be involved in the transition of the U2, U5 and U6 snRNP-containing IL complex to the snRNP-free IS complex leading to efficient debranching and turnover of excised introns. Plays a key role in antiviral innate immunity by promoting both MAVS-dependent signaling and NLRP6 inflammasome. Acts as an RNA virus sensor: recognizes and binds viral double stranded RNA (dsRNA) and activates the MAVS-dependent signaling to produce interferon-beta and interferon lambda-3 (IFNL3). Involved in intestinal antiviral innate immunity together with NLRP6: recognizes and binds viral dsRNA and promotes activation of the NLRP6 inflammasome in intestinal epithelial cells to restrict infection by enteric viruses. The NLRP6 inflammasome acts by promoting maturation and secretion of IL18 in the extracellular milieu. Also involved in antibacterial innate immunity by promoting Wnt-induced antimicrobial protein expression in Paneth cells. The polypeptide is ATP-dependent RNA helicase DHX15 (Homo sapiens (Human)).